The primary structure comprises 549 residues: Fumarate hydratase 1, mitochondrial (549 aa).

Cysteine 114 contributes to the [4Fe-4S] cluster binding site. (S)-malate-binding positions include 115 to 116 (QD), arginine 154, glycine 197, and 200 to 206 (NKSFLLQ). [4Fe-4S] cluster-binding residues include cysteine 233 and cysteine 328. Residues arginine 404, 450–454 (TTAGR), and lysine 474 contribute to the (S)-malate site.

Belongs to the class-I fumarase family. Homodimer. [4Fe-4S] cluster is required as a cofactor.

It is found in the mitochondrion. The enzyme catalyses (S)-malate = fumarate + H2O. Its pathway is carbohydrate metabolism; tricarboxylic acid cycle; (S)-malate from fumarate: step 1/1. With respect to regulation, specifically and competitively inhibited by 2-thiomalate, which coordinates with the catalytic [4Fe-4S] cluster. In terms of biological role, catalyzes the reversible hydration of fumarate to (S)-malate. Catalyzes the hydration of fumarate to L-malate in the tricarboxylic acid (TCA) cycle to facilitate a transition step in the production of energy in the form of NADH. This Leishmania major protein is Fumarate hydratase 1, mitochondrial.